We begin with the raw amino-acid sequence, 232 residues long: Small ribosomal subunit protein uS3 (232 aa).

One can recognise a KH type-2 domain in the interval 39–107 (IRKFLKTKLY…DIAINIKEER (69 aa)). Over residues 213 to 222 (QADKNEDTSP) the composition is skewed to basic and acidic residues. Residues 213-232 (QADKNEDTSPKKPRRARRGK) are disordered. The span at 223–232 (KKPRRARRGK) shows a compositional bias: basic residues.

The protein belongs to the universal ribosomal protein uS3 family. Part of the 30S ribosomal subunit. Forms a tight complex with proteins S10 and S14.

In terms of biological role, binds the lower part of the 30S subunit head. Binds mRNA in the 70S ribosome, positioning it for translation. In Campylobacter fetus subsp. fetus (strain 82-40), this protein is Small ribosomal subunit protein uS3.